Consider the following 591-residue polypeptide: Tricyclene synthase, chloroplastic (591 aa).

The transit peptide at 1 to 45 (MATLLQIGSGVIYSNALRKTLRRPQSSTCIIVTETTPCNKSPTVQ) directs the protein to the chloroplast. The (2E)-geranyl diphosphate site is built by R302, D339, D343, R481, and N484. D339 and D343 together coordinate Mg(2+). The DDXXD motif motif lies at 339–343 (DDIYD). Mg(2+)-binding residues include N484, T488, and E492.

This sequence belongs to the terpene synthase family. Tpsb subfamily. It depends on Mg(2+) as a cofactor. Mn(2+) serves as cofactor. In terms of tissue distribution, predominantly expressed in flowers but also in leaves, siliques and in stems.

It localises to the plastid. The protein resides in the chloroplast stroma. The enzyme catalyses (2E)-geranyl diphosphate = beta-myrcene + diphosphate. It catalyses the reaction (2E)-geranyl diphosphate = tricyclene + diphosphate. The catalysed reaction is (2E)-geranyl diphosphate = (E)-beta-ocimene + diphosphate. It participates in secondary metabolite biosynthesis; terpenoid biosynthesis. Involved in monoterpene (C10) biosynthesis. The major product is beta-myrcene (56%) followed by (E)-beta-ocimene (20%) and minor amounts (less than 5%) of the cyclic monoterpene (-)-limonene, (+)-limonene, 2-carene and tricyclene. In Arabidopsis thaliana (Mouse-ear cress), this protein is Tricyclene synthase, chloroplastic.